Consider the following 286-residue polypeptide: MTETAFLKLFVAIVITFILVLPEFFKTPKERTLELSCLEVCFLPNSTYPLSSFNFSSVAFLQPAEETQTIMGILPNHSSFQSFAEICQGITSGLPMCSLCLVCESKGDVDFTSQEQTSKGLVMRGSKEVKASDFYSPCEYFNVTVALLADPVKEDTTCTPEGHPGEAIALDEDPVREKSLNHTCRFMKNTDNCTHIFLHLEMDVKSVTCSMKITWYVLVLFVFMLGIIFIIYKILEEHRRVWRRQSHNYKSSSVLFRGHDSGKLSTLNVRVIPGYPWTIWTRDFDE.

The Cytoplasmic portion of the chain corresponds to 1–4; that stretch reads MTET. A helical transmembrane segment spans residues 5 to 25; sequence AFLKLFVAIVITFILVLPEFF. Residues 26–214 are Extracellular-facing; that stretch reads KTPKERTLEL…KSVTCSMKIT (189 aa). Asn-45, Asn-54, Asn-76, and Asn-142 each carry an N-linked (GlcNAc...) asparagine glycan. Residues 215-235 traverse the membrane as a helical segment; that stretch reads WYVLVLFVFMLGIIFIIYKIL. Residues 236–286 are Cytoplasmic-facing; that stretch reads EEHRRVWRRQSHNYKSSSVLFRGHDSGKLSTLNVRVIPGYPWTIWTRDFDE.

It localises to the membrane. In Rattus norvegicus (Rat), this protein is Transmembrane protein 156 (Tmem156).